A 136-amino-acid chain; its full sequence is Small ribosomal subunit protein eS17A (136 aa).

The protein belongs to the eukaryotic ribosomal protein eS17 family. In terms of assembly, component of the small ribosomal subunit (SSU). Mature yeast ribosomes consist of a small (40S) and a large (60S) subunit. The 40S small subunit contains 1 molecule of ribosomal RNA (18S rRNA) and 33 different proteins (encoded by 57 genes). The large 60S subunit contains 3 rRNA molecules (25S, 5.8S and 5S rRNA) and 46 different proteins (encoded by 81 genes).

It localises to the cytoplasm. In terms of biological role, component of the ribosome, a large ribonucleoprotein complex responsible for the synthesis of proteins in the cell. The small ribosomal subunit (SSU) binds messenger RNAs (mRNAs) and translates the encoded message by selecting cognate aminoacyl-transfer RNA (tRNA) molecules. The large subunit (LSU) contains the ribosomal catalytic site termed the peptidyl transferase center (PTC), which catalyzes the formation of peptide bonds, thereby polymerizing the amino acids delivered by tRNAs into a polypeptide chain. The nascent polypeptides leave the ribosome through a tunnel in the LSU and interact with protein factors that function in enzymatic processing, targeting, and the membrane insertion of nascent chains at the exit of the ribosomal tunnel. This is Small ribosomal subunit protein eS17A from Saccharomyces cerevisiae (strain ATCC 204508 / S288c) (Baker's yeast).